The following is a 1007-amino-acid chain: Beta-galactosidase (1007 aa).

The interval 29–48 (TIPPHSDHESFQSQEELEEG) is disordered. The active-site Proton donor is the Glu-465. Residue Glu-532 is the Nucleophile of the active site.

It belongs to the glycosyl hydrolase 2 family. In terms of assembly, monomer.

It carries out the reaction Hydrolysis of terminal non-reducing beta-D-galactose residues in beta-D-galactosides.. In Lactobacillus delbrueckii subsp. bulgaricus, this protein is Beta-galactosidase (lacZ).